The sequence spans 568 residues: U6 small nuclear RNA (adenine-(43)-N(6))-methyltransferase (568 aa).

The segment at 1 to 20 is disordered; it reads MSEIDTNDIKKEMDNKNYRD. Residues 7-20 show a composition bias toward basic and acidic residues; sequence NDIKKEMDNKNYRD. Residues arginine 117, glycine 151, aspartate 175, and asparagine 250 each contribute to the S-adenosyl-L-methionine site. 3 disordered regions span residues 363-383, 403-431, and 503-538; these read KENN…INNN, NLDS…NNNN, and DPKI…NKNN. Low complexity-rich tracts occupy residues 365–383, 409–431, and 507–538; these read NNNI…INNN, NNNN…NNNN, and NNNN…NKNN.

This sequence belongs to the methyltransferase superfamily. METTL16/RlmF family.

It catalyses the reaction adenosine in U6 snRNA + S-adenosyl-L-methionine = N(6)-methyladenosine in U6 snRNA + S-adenosyl-L-homocysteine + H(+). Its function is as follows. RNA N6-methyltransferase that mediates N6-methylation of adenine of U6 small nuclear RNA (U6 snRNA). In Dictyostelium discoideum (Social amoeba), this protein is U6 small nuclear RNA (adenine-(43)-N(6))-methyltransferase.